Reading from the N-terminus, the 545-residue chain is Glutamine-dependent NAD(+) synthetase (545 aa).

The CN hydrolase domain occupies 5-247; it reads LRIAMAQFDF…DQWLVVDYMR (243 aa). Glu46 acts as the Proton acceptor; for glutaminase activity in catalysis. Lys113 functions as the For glutaminase activity in the catalytic mechanism. Position 119 (Tyr119) interacts with L-glutamine. Residue Cys151 is the Nucleophile; for glutaminase activity of the active site. Ser177 and Lys183 together coordinate L-glutamine. Residues 269 to 545 form a ligase region; that stretch reads VWRAVVRGVQ…RYPISNAYRG (277 aa). 292-299 contacts ATP; sequence GLSGGIDS. Asn375 is a deamido-NAD(+) binding site. Thr399 provides a ligand contact to ATP. Deamido-NAD(+) is bound by residues Glu404 and Lys516.

It in the C-terminal section; belongs to the NAD synthetase family.

It catalyses the reaction deamido-NAD(+) + L-glutamine + ATP + H2O = L-glutamate + AMP + diphosphate + NAD(+) + H(+). Its pathway is cofactor biosynthesis; NAD(+) biosynthesis; NAD(+) from deamido-NAD(+) (L-Gln route): step 1/1. Its function is as follows. Catalyzes the ATP-dependent amidation of deamido-NAD to form NAD. Uses L-glutamine as a nitrogen source. The sequence is that of Glutamine-dependent NAD(+) synthetase from Xylella fastidiosa (strain Temecula1 / ATCC 700964).